Reading from the N-terminus, the 91-residue chain is Small ribosomal subunit protein bS6 (91 aa).

Belongs to the bacterial ribosomal protein bS6 family.

Its function is as follows. Binds together with bS18 to 16S ribosomal RNA. The polypeptide is Small ribosomal subunit protein bS6 (Leptospira interrogans serogroup Icterohaemorrhagiae serovar copenhageni (strain Fiocruz L1-130)).